Reading from the N-terminus, the 369-residue chain is Probable dual-specificity RNA methyltransferase RlmN (369 aa).

E108 serves as the catalytic Proton acceptor. Residues 114-357 form the Radical SAM core domain; that stretch reads YPDRATVCIS…CTVRDTRGQE (244 aa). A disulfide bridge connects residues C121 and C362. [4Fe-4S] cluster is bound by residues C128, C132, and C135. Residues 183 to 184, S217, 240 to 242, and N319 each bind S-adenosyl-L-methionine; these read GE and SLH. Catalysis depends on C362, which acts as the S-methylcysteine intermediate.

The protein belongs to the radical SAM superfamily. RlmN family. It depends on [4Fe-4S] cluster as a cofactor.

It is found in the cytoplasm. It carries out the reaction adenosine(2503) in 23S rRNA + 2 reduced [2Fe-2S]-[ferredoxin] + 2 S-adenosyl-L-methionine = 2-methyladenosine(2503) in 23S rRNA + 5'-deoxyadenosine + L-methionine + 2 oxidized [2Fe-2S]-[ferredoxin] + S-adenosyl-L-homocysteine. The enzyme catalyses adenosine(37) in tRNA + 2 reduced [2Fe-2S]-[ferredoxin] + 2 S-adenosyl-L-methionine = 2-methyladenosine(37) in tRNA + 5'-deoxyadenosine + L-methionine + 2 oxidized [2Fe-2S]-[ferredoxin] + S-adenosyl-L-homocysteine. Functionally, specifically methylates position 2 of adenine 2503 in 23S rRNA and position 2 of adenine 37 in tRNAs. This Saccharopolyspora erythraea (strain ATCC 11635 / DSM 40517 / JCM 4748 / NBRC 13426 / NCIMB 8594 / NRRL 2338) protein is Probable dual-specificity RNA methyltransferase RlmN.